The sequence spans 550 residues: Chaperonin GroEL (550 aa).

ATP-binding positions include 30 to 33 (TLGP), K51, 87 to 91 (DGTTT), G414, and D494.

It belongs to the chaperonin (HSP60) family. Forms a cylinder of 14 subunits composed of two heptameric rings stacked back-to-back. Interacts with the co-chaperonin GroES.

The protein localises to the cytoplasm. The catalysed reaction is ATP + H2O + a folded polypeptide = ADP + phosphate + an unfolded polypeptide.. In terms of biological role, together with its co-chaperonin GroES, plays an essential role in assisting protein folding. The GroEL-GroES system forms a nano-cage that allows encapsulation of the non-native substrate proteins and provides a physical environment optimized to promote and accelerate protein folding. In Buchnera aphidicola subsp. Thelaxes suberi, this protein is Chaperonin GroEL.